The chain runs to 78 residues: Acyl carrier protein (78 aa).

In terms of domain architecture, Carrier spans 2 to 77; sequence SDTAERVKKI…DAVKYIEKAT (76 aa). An O-(pantetheine 4'-phosphoryl)serine modification is found at Ser37.

It belongs to the acyl carrier protein (ACP) family. 4'-phosphopantetheine is transferred from CoA to a specific serine of apo-ACP by AcpS. This modification is essential for activity because fatty acids are bound in thioester linkage to the sulfhydryl of the prosthetic group.

Its subcellular location is the cytoplasm. The protein operates within lipid metabolism; fatty acid biosynthesis. Its function is as follows. Carrier of the growing fatty acid chain in fatty acid biosynthesis. This chain is Acyl carrier protein, found in Chelativorans sp. (strain BNC1).